The primary structure comprises 344 residues: Phosphoribosylformylglycinamidine cyclo-ligase (344 aa).

The protein belongs to the AIR synthase family.

The protein localises to the cytoplasm. It catalyses the reaction 2-formamido-N(1)-(5-O-phospho-beta-D-ribosyl)acetamidine + ATP = 5-amino-1-(5-phospho-beta-D-ribosyl)imidazole + ADP + phosphate + H(+). Its pathway is purine metabolism; IMP biosynthesis via de novo pathway; 5-amino-1-(5-phospho-D-ribosyl)imidazole from N(2)-formyl-N(1)-(5-phospho-D-ribosyl)glycinamide: step 2/2. In Haemophilus influenzae (strain PittEE), this protein is Phosphoribosylformylglycinamidine cyclo-ligase.